Reading from the N-terminus, the 731-residue chain is Replication restart protein PriA (731 aa).

The 3'BD stretch occupies residues 1 to 98; it reads MSVAHVALPV…HPIGDVLFHA (98 aa). The WH stretch occupies residues 115–177; it reads WYWFATEQGQ…RGKGLAELAC (63 aa). The helicase lobe 1 stretch occupies residues 200–375; it reads TEQATAVGAI…VRQGKYRQLT (176 aa). Residues 210–376 form the Helicase ATP-binding domain; it reads HSAADRFSAW…RQGKYRQLTL (167 aa). 223–230 is a binding site for ATP; that stretch reads GITGSGKT. 6 residues coordinate ADP: glycine 226, glycine 228, lysine 229, threonine 230, glutamate 231, and arginine 263. The DEAH box signature appears at 319–322; sequence DEEH. Residues 326–340 carry the Aromatic-rich loop (ARL) motif; sequence YKQQEGWRYHARDLA. Residues 387–430 are helicase lobe 2, N-terminus; sequence QQHVLDLKGQPLQAGLSPALISRMRQHLQADNQVILFLNRRGFA. Residues 431–485 are CRR; it reads PALLCHDCGWIAECPRCDSYYTLHQAQHHLRCHHCDSQRPIPRQCPSCGSTHLVP. Residues cysteine 435, cysteine 438, cysteine 444, cysteine 447, cysteine 462, cysteine 465, cysteine 475, and cysteine 478 each contribute to the Zn(2+) site. Positions 470–637 constitute a Helicase C-terminal domain; the sequence is PIPRQCPSCG…QLPPWTSHVL (168 aa). The tract at residues 486 to 626 is helicase lobe 2, C-terminus; the sequence is VGIGTEQLEQ…AEQALAERQT (141 aa). ADP is bound at residue lysine 543. Positions 633–731 are CTD; the sequence is TSHVLIRAED…WVLDVDPIEG (99 aa).

The protein belongs to the helicase family. PriA subfamily. In terms of assembly, binds SSB. Component of the replication restart primosome. It depends on Zn(2+) as a cofactor.

It catalyses the reaction Couples ATP hydrolysis with the unwinding of duplex DNA by translocating in the 3'-5' direction.. The catalysed reaction is ATP + H2O = ADP + phosphate + H(+). ATPase activity is stimulated by single-stranded binding protein (SSB). Initiates the restart of stalled replication forks, which reloads the replicative helicase on sites other than the origin of replication. Recognizes and binds to abandoned replication forks and remodels them to uncover a helicase loading site. Promotes assembly of the primosome at these replication forks. Functionally, recognizes abandoned replication forks and remodels SSB on ssDNA to uncover a loading site for DnaB. Binds replication fork DNA, has DNA-dependent ATPase activity in the presence of replication fork DNA, restores normal cell growth and SOS induction to E.coli mutant pirA304. The chain is Replication restart protein PriA from Klebsiella pneumoniae subsp. pneumoniae (strain ATCC 700721 / MGH 78578).